The primary structure comprises 198 residues: Holliday junction branch migration complex subunit RuvA (198 aa).

The tract at residues M1–H63 is domain I. A domain II region spans residues T64 to K142. A flexible linker region spans residues A143–K147. The domain III stretch occupies residues A148–G198.

The protein belongs to the RuvA family. Homotetramer. Forms an RuvA(8)-RuvB(12)-Holliday junction (HJ) complex. HJ DNA is sandwiched between 2 RuvA tetramers; dsDNA enters through RuvA and exits via RuvB. An RuvB hexamer assembles on each DNA strand where it exits the tetramer. Each RuvB hexamer is contacted by two RuvA subunits (via domain III) on 2 adjacent RuvB subunits; this complex drives branch migration. In the full resolvosome a probable DNA-RuvA(4)-RuvB(12)-RuvC(2) complex forms which resolves the HJ.

It is found in the cytoplasm. Its function is as follows. The RuvA-RuvB-RuvC complex processes Holliday junction (HJ) DNA during genetic recombination and DNA repair, while the RuvA-RuvB complex plays an important role in the rescue of blocked DNA replication forks via replication fork reversal (RFR). RuvA specifically binds to HJ cruciform DNA, conferring on it an open structure. The RuvB hexamer acts as an ATP-dependent pump, pulling dsDNA into and through the RuvAB complex. HJ branch migration allows RuvC to scan DNA until it finds its consensus sequence, where it cleaves and resolves the cruciform DNA. The polypeptide is Holliday junction branch migration complex subunit RuvA (Streptococcus pyogenes serotype M1).